The sequence spans 197 residues: 3-isopropylmalate dehydratase small subunit (197 aa).

The protein belongs to the LeuD family. LeuD type 1 subfamily. Heterodimer of LeuC and LeuD.

The catalysed reaction is (2R,3S)-3-isopropylmalate = (2S)-2-isopropylmalate. It participates in amino-acid biosynthesis; L-leucine biosynthesis; L-leucine from 3-methyl-2-oxobutanoate: step 2/4. In terms of biological role, catalyzes the isomerization between 2-isopropylmalate and 3-isopropylmalate, via the formation of 2-isopropylmaleate. The chain is 3-isopropylmalate dehydratase small subunit from Corynebacterium glutamicum (strain ATCC 13032 / DSM 20300 / JCM 1318 / BCRC 11384 / CCUG 27702 / LMG 3730 / NBRC 12168 / NCIMB 10025 / NRRL B-2784 / 534).